The sequence spans 1140 residues: Envelopment polyprotein (1140 aa).

The signal sequence occupies residues 1–17 (MVGWVCISLVVLATTTA). Residues 18 to 489 (GLTRNLYELK…VPGLHGWATT (472 aa)) lie on the Lumenal side of the membrane. 6 disulfides stabilise this stretch: C30–C155, C64–C161, C113–C132, C137–C142, C179–C189, and C214–C251. A glycan (N-linked (GlcNAc...) asparagine; by host) is linked at N138. The N-linked (GlcNAc...) asparagine; by host glycan is linked to N351. 4 cysteine pairs are disulfide-bonded: C380–C439, C384–C393, C409–C428, and C456–C479. N403 carries N-linked (GlcNAc...) asparagine; by host glycosylation. The chain crosses the membrane as a helical span at residues 490–510 (ALLITFCFGWLLIPTITMIIL). The Cytoplasmic segment spans residues 511–631 (KILRLLTFSC…LGVFRYKSRC (121 aa)). The binding to the ribonucleoprotein stretch occupies residues 520-537 (CSHYSTESKFKAILERVK). 2 consecutive CCHC-type zinc fingers follow at residues 549–569 (CDVC…KKSC) and 574–595 (CPYC…FSIC). Binding to the ribonucleoprotein regions lie at residues 592-609 (FSIC…KKSL), 596-607 (KLTNRFQENLKK), and 615-629 (KQGC…RYKS). An interaction with host TRAF3 region spans residues 611 to 638 (RPEVKQGCYRTLGVFRYKSRCYVGLVWG). Positions 615–638 (KQGCYRTLGVFRYKSRCYVGLVWG) constitute an ITAM domain. Phosphotyrosine; by host is present on residues Y619 and Y632. Residues 619 to 622 (YRTL) carry the YxxL motif. Residues 632–652 (YVGLVWGVLLTTELIVWAASA) form a helical membrane-spanning segment. At 653-1108 (DTPLMESGWS…EWLLGILNGN (456 aa)) the chain is on the lumenal side. Cystine bridges form between C739/C774, C743/C781, C755/C888, C769/C899, C784/C907, C810/C819, C827/C836, and C867/C871. The tract at residues 761–781 (YQYETSWGCNPPDCPGVGTGC) is fusion loop. A glycan (N-linked (GlcNAc...) asparagine; by host) is linked at N931. Cystine bridges form between C973/C1003, C996/C1048, C1013/C1018, C1049/C1054, and C1088/C1092. A helical transmembrane segment spans residues 1109 to 1129 (WVVVAVLIVILILSILLFSFF). A binding to the ribonucleoprotein region spans residues 1125 to 1140 (LFSFFCPIRGRKNKSN). The Cytoplasmic portion of the chain corresponds to 1130–1140 (CPIRGRKNKSN).

This sequence belongs to the hantavirus envelope glycoprotein family. As to quaternary structure, homodimer. Homotetramer; forms heterotetrameric Gn-Gc spikes in the pre-fusion conformation. Interacts (via C-terminus) with the nucleoprotein. Interacts with host TUFM; this interaction contributes to the virus-induced degradation of mitochondria by autophagy, which leads to degradation of host MAVS and inhibition of type I interferon (IFN) responses. Interacts with host MAP1LC3B; this interaction contributes to the virus-induced degradation of mitochondria by autophagy, which leads to degradation of host MAVS and inhibition of type I interferon (IFN) responses. Interacts (via C-terminus) with host TRAF3 (via N-terminus); this interaction inhibits the formation of TRAF3-TBK1 complexes. In terms of assembly, homodimer. Homotetramer; forms heterotetrameric Gn-Gc spikes in the pre-fusion conformation. Homotrimer; forms homotrimer in the post-fusion conformation at acidic pH. Interacts (via C-terminus) with the nucleoprotein. In terms of processing, envelope polyprotein precursor is quickly cleaved in vivo just after synthesis, presumably by host signal peptidase.

It is found in the virion membrane. Its subcellular location is the host cell surface. It localises to the host Golgi apparatus membrane. The protein localises to the host endoplasmic reticulum membrane. The protein resides in the host mitochondrion. Forms homotetramers with glycoprotein C at the surface of the virion. Attaches the virion to host cell receptors including integrin ITGAV/ITGB3. This attachment induces virion internalization predominantly through clathrin-dependent endocytosis. Mediates the assembly and budding of infectious virus particles through its interaction with the nucleocapsid protein and the viral genome. May dysregulate normal immune and endothelial cell responses through an ITAM motif. Translocates to mitochondria, binds to host TUFM and recruits MAP1LC3B. These interactions induce mitochondrial autophagy and therefore destruction of host MAVS leading to inhibition of type I interferon (IFN) responses. Concomitant breakdown of glycoprotein N is apparently prevented by the nucleoprotein that may inhibit Gn-stimulated autophagosome-lysosome fusion. Interacts with the viral genomic RNA. Inhibits the host RIG-I/TBK1 pathway by disrupting the formation of TBK1-TRAF3 complexes and downstream signaling responses required for IFN-beta transcription. Functionally, forms homotetramers with glycoprotein N at the surface of the virion. Attaches the virion to host cell receptors including integrin ITGAV/ITGB3. This attachment induces virion internalization predominantly through clathrin-dependent endocytosis. Class II fusion protein that promotes fusion of viral membrane with host endosomal membrane after endocytosis of the virion. The chain is Envelopment polyprotein (GP) from Homo sapiens (Human).